The chain runs to 323 residues: Fructose-bisphosphate aldolase (323 aa).

Position 50 (Ser50) interacts with beta-D-fructose 1,6-bisphosphate. Asp83 acts as the Proton donor in catalysis. Positions 84 and 178 each coordinate Zn(2+). The beta-D-fructose 1,6-bisphosphate site is built by His178, Gly179, and Lys182. Zn(2+) is bound at residue His210. Beta-D-fructose 1,6-bisphosphate contacts are provided by Gly211, Ser213, Asn253, Asp255, Ser256, Arg259, and Arg280.

This sequence belongs to the class II fructose-bisphosphate aldolase family. Homodimer. It depends on Zn(2+) as a cofactor.

The catalysed reaction is beta-D-fructose 1,6-bisphosphate = D-glyceraldehyde 3-phosphate + dihydroxyacetone phosphate. It functions in the pathway carbohydrate degradation; glycolysis; D-glyceraldehyde 3-phosphate and glycerone phosphate from D-glucose: step 4/4. Plays a key role in glycolysis by catalyzing the cleavage of fructose 1,6-bisphosphate into dihydroxyacetone phosphate and glyceraldehyde 3-phosphate. Does not cleave D-tagatose-1,6-bisphosphate. This Giardia intestinalis (strain ATCC 50803 / WB clone C6) (Giardia lamblia) protein is Fructose-bisphosphate aldolase.